Consider the following 290-residue polypeptide: MVIQKEKKSCGQVVEEWKEFVWNPRTHQFMGRTGTSWAFILLFYLVFYGFLTAMFSLTMWVMLQTVSDHTPKYQDRLATPGLMIRPKTENLDVIVNISDTESWGQHVQKLNKFLEPYNDSIQAQKNDVCRPGRYYEQPDNGVLNYPKRACQFNRTQLGDCSGIGDPTHYGYSTGQPCVFIKMNRVINFYAGANQSMNVTCVGKRDEDAENLGHFVMFPANGSIDLMYFPYYGKKFHVNYTQPLVAVKFLNVTPNVEVNVECRINAANIATDDERDKFAGRVAFKLRINKT.

At 1–39 the chain is on the cytoplasmic side; it reads MVIQKEKKSCGQVVEEWKEFVWNPRTHQFMGRTGTSWAF. Residues 40 to 67 traverse the membrane as a helical; Signal-anchor for type II membrane protein segment; it reads ILLFYLVFYGFLTAMFSLTMWVMLQTVS. The Extracellular segment spans residues 68-290; that stretch reads DHTPKYQDRL…VAFKLRINKT (223 aa). Residues Asn96 and Asn118 are each glycosylated (N-linked (GlcNAc...) asparagine). A disulfide bridge connects residues Cys129 and Cys150. A glycan (N-linked (GlcNAc...) asparagine) is linked at Asn153. Cys160 and Cys177 are oxidised to a cystine. Residues Asn193, Asn197, Asn220, and Asn238 are each glycosylated (N-linked (GlcNAc...) asparagine). The segment at 193–290 is immunoglobulin-like; the sequence is NQSMNVTCVG…VAFKLRINKT (98 aa). A disulfide bridge connects residues Cys200 and Cys261.

The protein belongs to the X(+)/potassium ATPases subunit beta family. As to quaternary structure, the sodium/potassium-transporting ATPase is composed of a catalytic alpha subunit, an auxiliary non-catalytic beta subunit and an additional regulatory subunit. Interacts with isoform 2 of BSG.

Its subcellular location is the cell membrane. In terms of biological role, this is the non-catalytic component of the active enzyme, which catalyzes the hydrolysis of ATP coupled with the exchange of Na(+) and K(+) ions across the plasma membrane. The exact function of the beta-2 subunit is not known. Functionally, mediates cell adhesion of neurons and astrocytes, and promotes neurite outgrowth. This Mus musculus (Mouse) protein is Sodium/potassium-transporting ATPase subunit beta-2 (Atp1b2).